A 73-amino-acid polypeptide reads, in one-letter code: MNDLALALGLGIPLSLLVGMILGYFISIKIFKKQMRDNPPITENQIKAMYAKMGRKLSETQVKEIMRSIKNQK.

Residues 6-26 traverse the membrane as a helical segment; that stretch reads LALGLGIPLSLLVGMILGYFI.

The protein belongs to the UPF0154 family.

The protein localises to the membrane. This Mycoplasma genitalium (strain ATCC 33530 / DSM 19775 / NCTC 10195 / G37) (Mycoplasmoides genitalium) protein is UPF0154 protein MG335.1.